We begin with the raw amino-acid sequence, 247 residues long: 5'-nucleotidase SurE (247 aa).

Positions 8, 9, 39, and 91 each coordinate a divalent metal cation.

The protein belongs to the SurE nucleotidase family. Requires a divalent metal cation as cofactor.

It is found in the cytoplasm. The enzyme catalyses a ribonucleoside 5'-phosphate + H2O = a ribonucleoside + phosphate. Its function is as follows. Nucleotidase that shows phosphatase activity on nucleoside 5'-monophosphates. This chain is 5'-nucleotidase SurE, found in Pelobacter propionicus (strain DSM 2379 / NBRC 103807 / OttBd1).